Consider the following 84-residue polypeptide: uncharacterized protein (84 aa).

This is an uncharacterized protein from Vaccinia virus (strain Copenhagen) (VACV).